The primary structure comprises 129 residues: Protein Turandot B2 (129 aa).

Positions 1-21 (MNSATSLMCFALLLISPLCMG) are cleaved as a signal peptide.

It belongs to the Turandot family.

The protein resides in the secreted. In terms of biological role, a humoral factor that may play a role in stress tolerance. In Drosophila erecta (Fruit fly), this protein is Protein Turandot B2 (TotB2).